The sequence spans 275 residues: Interleukin-2 receptor subunit alpha (275 aa).

The signal sequence occupies residues 1–21 (MEPSLLLWGILTFVVVHGHVT). The Sushi 1 domain occupies 22–84 (ELCDENPPDI…SWENQCRCIS (63 aa)). Residues 22–243 (ELCDENPPDI…ESFVFTTEYQ (222 aa)) lie on the Extracellular side of the membrane. Cystine bridges form between Cys-24-Cys-67, Cys-49-Cys-80, and Cys-51-Cys-82. 2 N-linked (GlcNAc...) asparagine glycosylation sites follow: Asn-60 and Asn-70. The segment at 91 to 118 (DGQIIPKPEEQKGKSPMGMQSQMQPTDQ) is disordered. Over residues 108-118 (GMQSQMQPTDQ) the composition is skewed to polar residues. One can recognise a Sushi 2 domain in the interval 123-186 (GHCREPPPWE…WTQPRLQCLS (64 aa)). Intrachain disulfides connect Cys-125-Cys-168 and Cys-152-Cys-184. Positions 188–213 (RSDGWFPDDEEPQASTDAALGSDTSC) are disordered. Residues 244–262 (IAVAGCVLLLISIVLLSGL) form a helical membrane-spanning segment. Residues 263–275 (TWQRRWRKSRRTI) are Cytoplasmic-facing.

As to quaternary structure, non-covalent dimer of an alpha and a beta subunit. IL2R exists in 3 different forms: a high affinity dimer, an intermediate affinity monomer (beta subunit), and a low affinity monomer (alpha subunit). The high and intermediate affinity forms also associate with a gamma subunit.

Its subcellular location is the membrane. In terms of biological role, receptor for interleukin-2. The receptor is involved in the regulation of immune tolerance by controlling regulatory T cells (TREGs) activity. TREGs suppress the activation and expansion of autoreactive T-cells. The chain is Interleukin-2 receptor subunit alpha (IL2RA) from Felis catus (Cat).